The primary structure comprises 32 residues: Photosystem I reaction center subunit XII (32 aa).

The chain crosses the membrane as a helical span at residues 3-23 (SISDGQIVVALISAFIIVILA).

The protein belongs to the PsaM family.

It is found in the plastid. The protein resides in the chloroplast thylakoid membrane. The chain is Photosystem I reaction center subunit XII from Anthoceros angustus (Hornwort).